The primary structure comprises 498 residues: MPALSHYRSVSSLPSVDRSFLLIQRLRIHGSSSSFPESSPSASILSGADPLKCTVSGGSLAKWITGISAGSALGFLYWSSGSSDSISGLFGGSNLLSFADSSTPSVCGVKVGDLKPRSFIPKLSLPGYSSGFIFGDAYRRKIFFNYEKRLRLQSPPEKVFEYFASVRTDKGEILMKPADLMRAIVPVFPPSESHLVREGYLTGERNPGELRCSPSEFFMLFDVDNDGLISFKEYIFFVTLLSIPESSFAVAFKMFDTDNNGEIDKEEFKTVMSLMRSQHRQGVGHRDGLRTGLHMTGSVEDGGLVEYFFGKDGSQKLKHDKFTKFMKDLTEEMLRLEFAHYDYKRRGSISAKDFALSMVAAADASHLSKLLDRVESLSEHPHLRDMRISLKEFKQFDELRSKLGPFSLALFAYGKANGLLTMKDFKRAASQVCGITLSDNVIEIAFHVFDSNQDGNLSVDEFLRVLHRRERDVAQPIAKGLSRYFSDGWKGSKNCSSS.

The transit peptide at 1–29 directs the protein to the mitochondrion; the sequence is MPALSHYRSVSSLPSVDRSFLLIQRLRIH. EF-hand domains follow at residues 216–241, 243–278, 329–364, and 437–472; these read EFFM…VTLL, IPES…MRSQ, LTEE…AADA, and LSDN…RERD. The Ca(2+) site is built by Asp-222, Asp-224, Asp-226, Glu-233, Asp-256, Asp-258, Asn-260, Glu-262, and Glu-267. The Ca(2+) site is built by Asp-450, Asn-452, Asp-454, Asn-456, and Glu-461.

Belongs to the MICU1 family. MICU1 subfamily. In terms of tissue distribution, expressed in both green and non-green tissues, including roots, shoots, floral buds and pollen.

The protein localises to the mitochondrion inner membrane. Its subcellular location is the mitochondrion intermembrane space. Functionally, calcium-binding protein maintaining matrix calcium levels at low concentration. Regulates mitochondrial calcium dynamics in planta by restricting influx. In Arabidopsis thaliana (Mouse-ear cress), this protein is Calcium uptake protein, mitochondrial.